The following is a 192-amino-acid chain: Pyridoxal 5'-phosphate synthase subunit PdxT (192 aa).

46-48 (GES) contacts L-glutamine. Catalysis depends on Cys-75, which acts as the Nucleophile. L-glutamine contacts are provided by residues Arg-101 and 129–130 (IR). Residues His-166 and Glu-168 each act as charge relay system in the active site.

This sequence belongs to the glutaminase PdxT/SNO family. In the presence of PdxS, forms a dodecamer of heterodimers. Only shows activity in the heterodimer.

The catalysed reaction is aldehydo-D-ribose 5-phosphate + D-glyceraldehyde 3-phosphate + L-glutamine = pyridoxal 5'-phosphate + L-glutamate + phosphate + 3 H2O + H(+). The enzyme catalyses L-glutamine + H2O = L-glutamate + NH4(+). The protein operates within cofactor biosynthesis; pyridoxal 5'-phosphate biosynthesis. Catalyzes the hydrolysis of glutamine to glutamate and ammonia as part of the biosynthesis of pyridoxal 5'-phosphate. The resulting ammonia molecule is channeled to the active site of PdxS. The polypeptide is Pyridoxal 5'-phosphate synthase subunit PdxT (Staphylococcus carnosus (strain TM300)).